A 315-amino-acid polypeptide reads, in one-letter code: Thioredoxin reductase (315 aa).

Residue 34-41 participates in FAD binding; sequence EGQKVGGQ. Cys-134 and Cys-137 are disulfide-bonded. 282–291 provides a ligand contact to FAD; the sequence is DIRVKSLRQV.

Belongs to the class-II pyridine nucleotide-disulfide oxidoreductase family. Homodimer. The cofactor is FAD.

It localises to the cytoplasm. It catalyses the reaction [thioredoxin]-dithiol + NADP(+) = [thioredoxin]-disulfide + NADPH + H(+). The polypeptide is Thioredoxin reductase (trxB) (Peptoclostridium acidaminophilum (Eubacterium acidaminophilum)).